The primary structure comprises 509 residues: Sensor histidine kinase TrcS (509 aa).

Helical transmembrane passes span 24–44 (LLLG…VVSV) and 188–208 (VALV…VVGY). Positions 207–269 (GYALRPLRRV…LLDNVDGALA (63 aa)) constitute an HAMP domain. One can recognise a Histidine kinase domain in the interval 284-502 (DASHELRTPL…VFRVRLPMIE (219 aa)). Position 287 is a phosphohistidine; by autocatalysis (His-287).

Requires a divalent metal cation as cofactor. Post-translationally, autophosphorylated.

The protein resides in the cell membrane. It carries out the reaction ATP + protein L-histidine = ADP + protein N-phospho-L-histidine.. In terms of biological role, member of the two-component regulatory system TrcS/TrcR. Phosphorylates TrcR. The TrcR-TrcS regulatory system may act as a transition regulatory system involved in adapting to an intracellular environment and transitioning from latency to reactivation. The polypeptide is Sensor histidine kinase TrcS (Mycobacterium tuberculosis (strain ATCC 25618 / H37Rv)).